We begin with the raw amino-acid sequence, 524 residues long: Histidine ammonia-lyase (524 aa).

Residues 139–141 (ASG) constitute a cross-link (5-imidazolinone (Ala-Gly)). The residue at position 140 (Ser-140) is a 2,3-didehydroalanine (Ser). Positions 500-524 (ADTQAPAPAKLPDSGDEDRDTTSRH) are disordered.

Belongs to the PAL/histidase family. Contains an active site 4-methylidene-imidazol-5-one (MIO), which is formed autocatalytically by cyclization and dehydration of residues Ala-Ser-Gly.

The protein localises to the cytoplasm. The catalysed reaction is L-histidine = trans-urocanate + NH4(+). It participates in amino-acid degradation; L-histidine degradation into L-glutamate; N-formimidoyl-L-glutamate from L-histidine: step 1/3. This is Histidine ammonia-lyase (hutH) from Deinococcus radiodurans (strain ATCC 13939 / DSM 20539 / JCM 16871 / CCUG 27074 / LMG 4051 / NBRC 15346 / NCIMB 9279 / VKM B-1422 / R1).